A 1071-amino-acid polypeptide reads, in one-letter code: MPVLPELAQIQFKGFSRFVHQKLLKELENFPKIEDTDKEVEFRSIGNQYQLTEPSLEERDAAYQCITYSADLYVPAQLICKEDQIVQEEDVRLGSIPWMNSGGTFIINGIARVLVSQILRSPGIYYNRESDQRGILAYTSTVISDQGGRFKLEIDGRNRIWVRISKKKKISIFILLVAMGLCKRDILQNSRYPRIFSNMFKRQKESIESPEDAIVELYKHLYSATDADVFFSESIFRELQKRFFQHRCELGRIGRRNLNIKLTLDVPETESFLLPQDILAAADHLVEISYGEGKLDDIDHLKNRRVRSVADLLQEQLKLALNRLENLIRQNLSRAVRRKRAITPRGLVTPVPVIAAFKEFFGSHPLSQFLDQTNPLSEMVHKRRLSSVGPGGLTRRTASFQARDIHFSHYGRICPIETSEGMNAGLISSLAIQAGVNTSGSLGSPYLEMSDSSGEEQLVNLSPAEDDYYRVASENLLLSEWRGSEKEIIPVRYQQEFLSVLWEQVDFRSIHPLHHFSIGASLIPFIEHNDANRALMGSTMQRQAVPLIKPERCIVGTGLESQVALDSGSVAISEQDGKVCYIDGNRIELSLIHEAKKNKLAQPTTIEELKIFERSNNNTCMHQKPAVSLGELLRGGEIVADGAATVRGELALGKNILVAYMPWEGYNFEDAVLISERLIYEDIFTSLHIEKHEVEICATNQGPERVTKQISQLDGYLLRHLDDDGLVELGSWVEAGDVLVGKLTPQEGASSSRVPEGRLLQAIFGIQLVNARESCLRVPIGGRGRVIDVRWVYPEDDATNDLEVIHIYILQRRKIQVGDKIAGRHGNKGIVSKIVPRQDMPYLQNGTPVDMILSPLGVPSRMNVGQIFECLLGLAGEFLETHYRVVPFDERYEREASRKLVFAELHEAGARTNNPWLFEPSHPGKSRLIDGRTGDPFGQSITTGKAYIMKLIHQVDDKIHARSSGPYALVTQQPLKGKSRRGGQRIGEMEVWALEGFGVSYTLQEMLTTKSDHIQARYKALSAIMTGKPVCKPKTVPESFRLLVRELRCMGLNLERNFISEEDLGREFENI.

This sequence belongs to the RNA polymerase beta chain family. As to quaternary structure, in plastids the minimal PEP RNA polymerase catalytic core is composed of four subunits: alpha, beta, beta', and beta''. When a (nuclear-encoded) sigma factor is associated with the core the holoenzyme is formed, which can initiate transcription.

The protein localises to the plastid. Its subcellular location is the chloroplast. The catalysed reaction is RNA(n) + a ribonucleoside 5'-triphosphate = RNA(n+1) + diphosphate. Its function is as follows. DNA-dependent RNA polymerase catalyzes the transcription of DNA into RNA using the four ribonucleoside triphosphates as substrates. The polypeptide is DNA-directed RNA polymerase subunit beta (Adiantum capillus-veneris (Maidenhair fern)).